A 777-amino-acid polypeptide reads, in one-letter code: Intraflagellar transport protein 80 homolog (777 aa).

WD repeat units lie at residues 12–50, 104–143, 145–185, 186–225, 227–265, 267–306, and 504–542; these read KHQE…TSLI, AHCG…RSTL, QQGT…LQWK, AHDG…LYGS, PHEH…YALE, PNTG…WEWK, and KLGT…YVDR.

As to quaternary structure, component of the IFT complex B, at least composed of IFT20, IFT22, IFT25, IFT27, IFT46, IFT52, TRAF3IP1/IFT54, IFT57, IFT74, IFT80, IFT81, and IFT88. Interacts with IFT88. Interacts with IFT57 and IFT70B.

The protein localises to the cytoplasm. It is found in the cytoskeleton. It localises to the cilium basal body. Its subcellular location is the cilium axoneme. Component of the intraflagellar transport (IFT) complex B, which is essential for the development and maintenance of motile and sensory cilia. In Mus musculus (Mouse), this protein is Intraflagellar transport protein 80 homolog (Ift80).